The following is a 366-amino-acid chain: Trans-enoyl reductase caaB (366 aa).

In terms of domain architecture, Enoyl reductase (ER) spans 19–363; it reads GAGQLSIYHD…RQTVSGHKLV (345 aa). Tyr-219 contributes to the NADP(+) binding site.

The protein belongs to the zinc-containing alcohol dehydrogenase family. In terms of assembly, monomer.

Its pathway is secondary metabolite biosynthesis. Functionally, trans-enoyl reductase; part of the gene cluster that produces the acyltetronic acid derivatives carlosic acid, agglomerin F and carlosic acid methyl ether. The PKS domains of caaA condenses two malonyl-CoAs into an acetyl starter unit, and form 1,3-diketohexanyl-ACP with the help of the trans-enoyl reductase caaB. Next, the C domain of caaA forms the ester bond between the acyl chain and L-malic acid (derived from the TCA cycle) and accepted by the A domain instead of an amino acid. Finally, the terminal reductase/Dieckmann cyclization (R/DKC) domain cyclizes the intermediate and releases the product as carlosic acid. Decarboxylation of carlosic acid followed by formation of the exocyclic double bond is likely to be catalyzed by the cytochrome P450 monooxygenase caaC. Thus, decarboxylation and oxidation would be coupled (performed by one enzyme) through concomitant abstraction of the hydrogen at C-4. Finally, sequential oxidations of the terminal C-10 methyl group to form carboxylic acid would be catalyzed by the 2-oxoglutarate-dependent dioxygenase caaD, which is required for the biosynthesis of agglomerin F. The protein is Trans-enoyl reductase caaB of Aspergillus niger (strain ATCC MYA-4892 / CBS 513.88 / FGSC A1513).